Consider the following 138-residue polypeptide: uncharacterized protein (138 aa).

Positions 17–38 (LCRNDVAHEAGTNNVQIMRIEK) form a DNA-binding region, H-T-H motif.

This is an uncharacterized protein from Herpetosiphon aurantiacus (Herpetosiphon giganteus).